Consider the following 883-residue polypeptide: Serine/threonine-protein kinase greatwall (883 aa).

The residue at position 1 (Met-1) is an N-acetylmethionine. Residues 1–23 (MEPTMGGEMESGGGAATGECVNR) form a disordered region. Positions 35 to 839 (FTIVKPISRG…MKELKHHPLF (805 aa)) constitute a Protein kinase domain. ATP-binding positions include 41–49 (ISRGAFGKV) and Lys-62. Catalysis depends on Asp-156, which acts as the Proton acceptor. A phosphothreonine mark is found at Thr-209 and Thr-224. Ser-295 bears the Phosphoserine mark. The segment at 298 to 317 (RLATSSTSSPSHTFISSMES) is disordered. The segment covering 301-314 (TSSTSSPSHTFISS) has biased composition (low complexity). Ser-373 and Ser-456 each carry phosphoserine. The segment at 511–530 (ENVGSSFTDKHQTPEKSPVP) is disordered. Thr-523 carries the phosphothreonine modification. A phosphoserine mark is found at Ser-556 and Ser-560. The interval 569 to 597 (IHMDSDSSFPGISIMESPLGGQSLDPDKN) is disordered. Residues Ser-635, Ser-661, and Ser-672 each carry the phosphoserine modification. Positions 706–737 (RSDMPYQQTPNQVKSETPYRTPKSVRRGAAPV) are disordered. The span at 710–720 (PYQQTPNQVKS) shows a compositional bias: polar residues. Thr-726 carries the post-translational modification Phosphothreonine. Position 729 is a phosphoserine (Ser-729). The residue at position 745 (Thr-745) is a Phosphothreonine; by CDK1. Residues 840–883 (SGVDWENLQHQKMPFIPQPDDETDTSYFEARNNAQHLTVSGFSL) enclose the AGC-kinase C-terminal domain. Ser-879 and Ser-882 each carry phosphoserine.

It belongs to the protein kinase superfamily. AGC Ser/Thr protein kinase family. Phosphorylation at Thr-745 by CDK1 during M phase activates its kinase activity. Maximum phosphorylation occurs in prometaphase.

Its subcellular location is the cytoplasm. It localises to the cytoskeleton. The protein localises to the microtubule organizing center. The protein resides in the centrosome. It is found in the nucleus. The catalysed reaction is L-seryl-[protein] + ATP = O-phospho-L-seryl-[protein] + ADP + H(+). The enzyme catalyses L-threonyl-[protein] + ATP = O-phospho-L-threonyl-[protein] + ADP + H(+). In terms of biological role, serine/threonine kinase that plays a key role in M phase by acting as a regulator of mitosis entry and maintenance. Acts by promoting the inactivation of protein phosphatase 2A (PP2A) during M phase: does not directly inhibit PP2A but acts by mediating phosphorylation and subsequent activation of ARPP19 and ENSA at 'Ser-62' and 'Ser-67', respectively. ARPP19 and ENSA are phosphatase inhibitors that specifically inhibit the PPP2R2D (PR55-delta) subunit of PP2A. Inactivation of PP2A during M phase is essential to keep cyclin-B1-CDK1 activity high. Following DNA damage, it is also involved in checkpoint recovery by being inhibited. This Bos taurus (Bovine) protein is Serine/threonine-protein kinase greatwall (MASTL).